We begin with the raw amino-acid sequence, 595 residues long: Adenine deaminase 2 (595 aa).

It belongs to the metallo-dependent hydrolases superfamily. Adenine deaminase family. It depends on Mn(2+) as a cofactor.

The catalysed reaction is adenine + H2O + H(+) = hypoxanthine + NH4(+). This chain is Adenine deaminase 2, found in Rhizobium etli (strain ATCC 51251 / DSM 11541 / JCM 21823 / NBRC 15573 / CFN 42).